The chain runs to 351 residues: DNA-directed RNA polymerase subunit alpha (351 aa).

The tract at residues 1–245 (MPRRNLLKGF…EHFTVFVNFD (245 aa)) is alpha N-terminal domain (alpha-NTD). The interval 261 to 351 (AVLELLNTKI…MRQKEEIDEA (91 aa)) is alpha C-terminal domain (alpha-CTD).

It belongs to the RNA polymerase alpha chain family. As to quaternary structure, homodimer. The RNAP catalytic core consists of 2 alpha, 1 beta, 1 beta' and 1 omega subunit. When a sigma factor is associated with the core the holoenzyme is formed, which can initiate transcription.

It carries out the reaction RNA(n) + a ribonucleoside 5'-triphosphate = RNA(n+1) + diphosphate. Functionally, DNA-dependent RNA polymerase catalyzes the transcription of DNA into RNA using the four ribonucleoside triphosphates as substrates. The polypeptide is DNA-directed RNA polymerase subunit alpha (Treponema pallidum (strain Nichols)).